Here is a 29-residue protein sequence, read N- to C-terminus: M-poneritoxin-Ng3d (29 aa).

As to expression, expressed by the venom gland.

The protein resides in the secreted. In terms of biological role, has activity against some Gram-positive bacteria and S.cerevisiae. Has a non-hemolytic activity. This chain is M-poneritoxin-Ng3d, found in Neoponera goeldii (Ponerine ant).